Consider the following 185-residue polypeptide: Threonylcarbamoyl-AMP synthase (185 aa).

Positions S4 to G185 constitute a YrdC-like domain.

It belongs to the SUA5 family. TsaC subfamily.

It localises to the cytoplasm. It carries out the reaction L-threonine + hydrogencarbonate + ATP = L-threonylcarbamoyladenylate + diphosphate + H2O. Its function is as follows. Required for the formation of a threonylcarbamoyl group on adenosine at position 37 (t(6)A37) in tRNAs that read codons beginning with adenine. Catalyzes the conversion of L-threonine, HCO(3)(-)/CO(2) and ATP to give threonylcarbamoyl-AMP (TC-AMP) as the acyladenylate intermediate, with the release of diphosphate. This Pseudomonas syringae pv. tomato (strain ATCC BAA-871 / DC3000) protein is Threonylcarbamoyl-AMP synthase.